The primary structure comprises 239 residues: Lipoprotein-releasing system ATP-binding protein LolD (239 aa).

The ABC transporter domain maps to Leu9 to Glu239. Residue Gly45–Ser52 coordinates ATP.

Belongs to the ABC transporter superfamily. Lipoprotein translocase (TC 3.A.1.125) family. The complex is composed of two ATP-binding proteins (LolD) and two transmembrane proteins (LolC and LolE).

The protein localises to the cell inner membrane. Part of the ABC transporter complex LolCDE involved in the translocation of mature outer membrane-directed lipoproteins, from the inner membrane to the periplasmic chaperone, LolA. Responsible for the formation of the LolA-lipoprotein complex in an ATP-dependent manner. The protein is Lipoprotein-releasing system ATP-binding protein LolD of Shewanella frigidimarina (strain NCIMB 400).